Consider the following 473-residue polypeptide: Fumarate hydratase class II (473 aa).

Residues 104-106 (SGT), 128-131 (HPND), 138-140 (SSN), and Thr186 contribute to the substrate site. The active-site Proton donor/acceptor is the His187. Ser318 is a catalytic residue. Residues Ser319 and 324-326 (KVN) contribute to the substrate site.

It belongs to the class-II fumarase/aspartase family. Fumarase subfamily. In terms of assembly, homotetramer.

The protein resides in the cytoplasm. It catalyses the reaction (S)-malate = fumarate + H2O. It functions in the pathway carbohydrate metabolism; tricarboxylic acid cycle; (S)-malate from fumarate: step 1/1. Its function is as follows. Involved in the TCA cycle. Catalyzes the stereospecific interconversion of fumarate to L-malate. This is Fumarate hydratase class II from Corynebacterium glutamicum (strain ATCC 13032 / DSM 20300 / JCM 1318 / BCRC 11384 / CCUG 27702 / LMG 3730 / NBRC 12168 / NCIMB 10025 / NRRL B-2784 / 534).